The chain runs to 423 residues: Lysosomal acid phosphatase (423 aa).

A signal peptide spans 1–30; the sequence is MAGRQSGWSQAALLQFLLGMCLMVMPPIQA. Over 31–380 the chain is Lumenal; that stretch reads RSLRFVTLLY…QLASDTADTE (350 aa). The active-site Nucleophile is the His-42. Residues Asn-92, Asn-133, Asn-167, Asn-177, Asn-191, Asn-197, and Asn-267 are each glycosylated (N-linked (GlcNAc...) asparagine). 3 disulfide bridges follow: Cys-159/Cys-370, Cys-212/Cys-310, and Cys-345/Cys-349. Catalysis depends on Asp-287, which acts as the Proton donor. N-linked (GlcNAc...) asparagine glycosylation is found at Asn-322 and Asn-331. Residues 381–401 form a helical membrane-spanning segment; the sequence is VIVALAVCGSILFLLIVLLLT. Residues 402-423 are Cytoplasmic-facing; the sequence is VLFRMQAQPPGYHHVADREDHA.

Belongs to the histidine acid phosphatase family. Post-translationally, the membrane-bound form is converted to the soluble form by sequential proteolytic processing. First, the C-terminal cytoplasmic tail is removed. Cleavage by a lysosomal protease releases the soluble form in the lysosome lumen.

The protein resides in the lysosome membrane. Its subcellular location is the lysosome lumen. It catalyses the reaction a phosphate monoester + H2O = an alcohol + phosphate. The sequence is that of Lysosomal acid phosphatase (Acp2) from Rattus norvegicus (Rat).